A 558-amino-acid chain; its full sequence is MTDESTADAGRDFIRDIVAADLASGKHKSVVTRFPPEPNGYLHLGHAKSICLNFGIAEEFGGCCHLRFDDTNPTKEEQEYIDAIQRDVRWLGFDWGKNLHYASDYFEQLYAWAQHLVRAGKAYVDDQSQEDIRLARGTLTEPGRDSPFRDRPVDENLDLFARMRAGEFPNGARVLRARIDMASGNINLRDPVLYRILHAPHPRTGTAWNIYPSYDFAHGQSDSIEHITHSICTLEFEDHRPLYDWFLDNLPVPSRPHQYEFARLNVTHTLLSKRILTELVRGGHVAGWDDPRMPTLAGLQRRGVPAEALREFIKRIGVAKANSTVDVGMLDFAIRETLNKSAPRRMAVLRPLKIVIENYPEGESEELEAVNHPDDPSRGTRRIRFGRELYIEQDDFMENPPKKFFRLSPGREVRLRYAYFVTCREVVKNAAGDVVELRCTYDPATKGGNAPDGRKVKATMHWVSAAEAVPAEIRLYGHLFATAQPDAANFASELNPQSLETLSGMVEPALARDDTDGAVQFERQGYFCRDRDSSPGRLVFNRTVGLRDTWAKVAAAGS.

A 'HIGH' region motif is present at residues Pro36–His46. ATP contacts are provided by residues Glu37–Asn39 and His43–Ser49. L-glutamine is bound by residues Asp69 and Tyr214. Residues Thr233, Arg263–Leu264, and Leu271–Lys273 contribute to the ATP site. A 'KMSKS' region motif is present at residues Leu270–Arg274.

Belongs to the class-I aminoacyl-tRNA synthetase family. In terms of assembly, monomer.

It is found in the cytoplasm. The enzyme catalyses tRNA(Gln) + L-glutamine + ATP = L-glutaminyl-tRNA(Gln) + AMP + diphosphate. This Nitrobacter hamburgensis (strain DSM 10229 / NCIMB 13809 / X14) protein is Glutamine--tRNA ligase.